The primary structure comprises 712 residues: Elongation factor G (712 aa).

In terms of domain architecture, tr-type G spans 8-290 (TRYRNIGISA…AVIEFLPSPT (283 aa)). GTP-binding positions include 17-24 (AHIDAGKT), 88-92 (DTPGH), and 142-145 (NKMD).

The protein belongs to the TRAFAC class translation factor GTPase superfamily. Classic translation factor GTPase family. EF-G/EF-2 subfamily.

The protein resides in the cytoplasm. Its function is as follows. Catalyzes the GTP-dependent ribosomal translocation step during translation elongation. During this step, the ribosome changes from the pre-translocational (PRE) to the post-translocational (POST) state as the newly formed A-site-bound peptidyl-tRNA and P-site-bound deacylated tRNA move to the P and E sites, respectively. Catalyzes the coordinated movement of the two tRNA molecules, the mRNA and conformational changes in the ribosome. In Acinetobacter baumannii (strain AB307-0294), this protein is Elongation factor G.